A 250-amino-acid polypeptide reads, in one-letter code: Ubiquinone/menaquinone biosynthesis C-methyltransferase UbiE (250 aa).

Residues threonine 74, aspartate 94, 122-123 (DA), and serine 139 each bind S-adenosyl-L-methionine.

Belongs to the class I-like SAM-binding methyltransferase superfamily. MenG/UbiE family.

It carries out the reaction a 2-demethylmenaquinol + S-adenosyl-L-methionine = a menaquinol + S-adenosyl-L-homocysteine + H(+). The catalysed reaction is a 2-methoxy-6-(all-trans-polyprenyl)benzene-1,4-diol + S-adenosyl-L-methionine = a 5-methoxy-2-methyl-3-(all-trans-polyprenyl)benzene-1,4-diol + S-adenosyl-L-homocysteine + H(+). Its pathway is quinol/quinone metabolism; menaquinone biosynthesis; menaquinol from 1,4-dihydroxy-2-naphthoate: step 2/2. It functions in the pathway cofactor biosynthesis; ubiquinone biosynthesis. In terms of biological role, methyltransferase required for the conversion of demethylmenaquinol (DMKH2) to menaquinol (MKH2) and the conversion of 2-polyprenyl-6-methoxy-1,4-benzoquinol (DDMQH2) to 2-polyprenyl-3-methyl-6-methoxy-1,4-benzoquinol (DMQH2). The protein is Ubiquinone/menaquinone biosynthesis C-methyltransferase UbiE of Roseobacter denitrificans (strain ATCC 33942 / OCh 114) (Erythrobacter sp. (strain OCh 114)).